The following is a 508-amino-acid chain: WD repeat-containing protein DDB_G0290555 (508 aa).

WD repeat units lie at residues 32-74 (TSEL…LIGE), 159-198 (NVAT…KTYS), 252-292 (FSKH…QVGS), and 295-334 (DSAG…MLHK). The segment at 368–508 (ENKNRINNDD…KKFAGLKKRK (141 aa)) is disordered. The segment covering 399–435 (MDSDDDIEDGDDNDVEFPMEADSDDSDFDLGNSDDDN) has biased composition (acidic residues). Residues 436 to 446 (ISVKKENKGDS) are compositionally biased toward basic and acidic residues. Over residues 447 to 456 (DDSDDDSDED) the composition is skewed to acidic residues. Positions 471–493 (NNNNNNNKGKNNKGKNNSSTKKT) are enriched in low complexity. Residues 497-508 (LKKKFAGLKKRK) are compositionally biased toward basic residues.

The protein is WD repeat-containing protein DDB_G0290555 of Dictyostelium discoideum (Social amoeba).